Here is a 145-residue protein sequence, read N- to C-terminus: AP-2 complex subunit sigma (145 aa).

The protein belongs to the adaptor complexes small subunit family. In terms of assembly, adaptor protein complex 2 (AP-2) is a heterotetramer composed of two large adaptins (alpha-type subunit apl3 and beta-type subunit apl1), a medium chain (mu-type subunit apm4) and a small adaptin (sigma-type subunit aps2).

The protein localises to the cell membrane. It localises to the membrane. Its subcellular location is the coated pit. Functionally, component of the adaptor complexes which link clathrin to receptors in coated vesicles. Clathrin-associated protein complexes are believed to interact with the cytoplasmic tails of membrane proteins, leading to their selection and concentration. This is AP-2 complex subunit sigma (aps2) from Aspergillus fumigatus (strain ATCC MYA-4609 / CBS 101355 / FGSC A1100 / Af293) (Neosartorya fumigata).